Consider the following 1443-residue polypeptide: Sterol 3-beta-glucosyltransferase ATG26 (1443 aa).

Over residues 1-13 (MATQADDAAASQA) the composition is skewed to low complexity. Disordered stretches follow at residues 1 to 69 (MATQ…MFMN) and 88 to 187 (NDRF…LTLT). Positions 18–32 (GDLKEHVHDELDKIQ) are enriched in basic and acidic residues. The span at 49–58 (DSEDSDDEDN) shows a compositional bias: acidic residues. Polar residues predominate over residues 104–117 (QNTRTESIARTSIL). The span at 125–134 (DKVHRRRKLS) shows a compositional bias: basic residues. The segment covering 164 to 173 (EVADEADDEH) has biased composition (acidic residues). Positions 240-284 (LKEIFEFDEYEQVIEEYPCWLLQSVLLQGYMYITSKHICFYAYLP) constitute a GRAM 1 domain. The PH domain occupies 289-385 (EAVKSGYLSK…WVKSLQRVIF (97 aa)). Positions 463-657 (EQVITGDDHD…HGDRHHGIPH (195 aa)) are disordered. A compositionally biased stretch (low complexity) spans 506–525 (LAPMSPLSPRSPSQLSPRAS). Residues 585 to 614 (SFLQSSIENPSISTLSPSSYDEPSASQILQ) show a composition bias toward polar residues. Positions 631 to 642 (SRKRDRSGKRTP) are enriched in basic residues. Residues 765–870 (RFRAHFALPE…DCAVTLHQLM (106 aa)) form the GRAM 2 domain. Positions 883–910 (DQEEQDDEEAAAAMAERDELQEARQDEF) form a coiled coil. 11 residues coordinate UDP-alpha-D-glucose: Ser-957, Arg-958, Asp-960, Ala-1265, His-1267, His-1280, Ser-1283, Gly-1284, Thr-1285, Asp-1304, and Gln-1305. The interval 1385–1443 (NAEHGLAEDDDDTEESWTFVGRDEPDPDAVTKKLSDGLAGLGAAGDRPPPLGSQAPTVA) is disordered. Residues 1405 to 1419 (GRDEPDPDAVTKKLS) are compositionally biased toward basic and acidic residues.

This sequence belongs to the glycosyltransferase 28 family.

Its subcellular location is the cytoplasm. The protein resides in the preautophagosomal structure membrane. The catalysed reaction is a sterol + UDP-alpha-D-glucose = a sterol 3-beta-D-glucoside + UDP + H(+). It carries out the reaction ergosterol + UDP-alpha-D-glucose = ergosteryl 3-beta-D-glucoside + UDP + H(+). Functionally, sterol glycosyltransferase responsible for the glycosylation of ergosterol to form ergosterol-glucoside. The protein is Sterol 3-beta-glucosyltransferase ATG26 of Gibberella zeae (strain ATCC MYA-4620 / CBS 123657 / FGSC 9075 / NRRL 31084 / PH-1) (Wheat head blight fungus).